Reading from the N-terminus, the 82-residue chain is Small ribosomal subunit protein bS18 (82 aa).

It belongs to the bacterial ribosomal protein bS18 family. As to quaternary structure, part of the 30S ribosomal subunit. Forms a tight heterodimer with protein bS6.

Binds as a heterodimer with protein bS6 to the central domain of the 16S rRNA, where it helps stabilize the platform of the 30S subunit. This Sinorhizobium fredii (strain NBRC 101917 / NGR234) protein is Small ribosomal subunit protein bS18.